The following is a 130-amino-acid chain: Small ribosomal subunit protein uS9 (130 aa).

It belongs to the universal ribosomal protein uS9 family.

This is Small ribosomal subunit protein uS9 from Sodalis glossinidius (strain morsitans).